The chain runs to 711 residues: Polyribonucleotide nucleotidyltransferase (711 aa).

Mg(2+) contacts are provided by aspartate 487 and aspartate 493. Residues 554–613 (PRIHTMKISAEKIKDVIGKGGAVIRALTEETGTTIEIEDDGTIKIAATEGAAAKEAIRRI) form the KH domain. An S1 motif domain is found at 623-691 (GRIYTGKVAR…RQGRVRLSMK (69 aa)). The segment at 691–711 (KEAVEKPAEEAAAEAPAAKEE) is disordered.

This sequence belongs to the polyribonucleotide nucleotidyltransferase family. In terms of assembly, component of the RNA degradosome, which is a multiprotein complex involved in RNA processing and mRNA degradation. Requires Mg(2+) as cofactor.

It is found in the cytoplasm. The catalysed reaction is RNA(n+1) + phosphate = RNA(n) + a ribonucleoside 5'-diphosphate. Its function is as follows. Involved in mRNA degradation. Catalyzes the phosphorolysis of single-stranded polyribonucleotides processively in the 3'- to 5'-direction. The chain is Polyribonucleotide nucleotidyltransferase from Vibrio parahaemolyticus serotype O3:K6 (strain RIMD 2210633).